The chain runs to 690 residues: MENDKMEIYESLIRWLSELNLSAPHGTVQELSDGAALAQALNQIAPEVFTDSWLSKIKSDVGANWRLKVSNLRKIIEGIYVYYQDELSLNLSEELRPDALKIAEKGDPHELGRLLQLILGCAVNCLEKQKYITQIMELEESLQRNIMAALQDIEYIWQGASPSRNSINTAATSLDVKTLQEDRDTLAQKCHETNKKMLGLIEEKAALQQEIVKLQAIVGRYENPNLIGDDGTSLGPIQLGSSRYNDLRKLVDSLKDELLQAETARDDLKMKSMIQEKEIGELQVKIDELHAATAEIAQLKDEIDILKEANEKLKICETQLQTYKKKLEDYNDLKKQIKLQEERSADYLKQNLEYEEEAKKYAGLKGQVELYKKKIQDLHGMLDEEMGKTVRAEFEYNQLQGQLAVVQREKETLLSERDTLREALDELKCGQAVGADGVGHGGPGGNTMSKELHSNDVCERIERLERENKALREGQGGQTALSQLLDDANQRNEKLREQLKSANQKILLLSQHHAEDGTTKSELEMQMKQTLELGEQRSSAQQQLDETTQHQLSNLHTKIANLEAALVVKDQELQAADVRYKKCVEKAKEVIKTLDAHAISEALLMDKVDSASGTGVDATLTTVGNGGTAARAPMGQQEEQLIATAFYRLGMVCHREAVDARLLSGPGQSFLARQRQPAARKPLNANYAKK.

Residues 6 to 122 (MEIYESLIRW…RLLQLILGCA (117 aa)) enclose the Calponin-homology (CH) domain. Coiled-coil stretches lie at residues 134-515 (QIME…HHAE) and 546-577 (ETTQHQLSNLHTKIANLEAALVVKDQELQAAD).

The protein belongs to the hook family. As to quaternary structure, homodimer. Interacts with microtubules via its N-terminus.

The protein localises to the cytoplasm. It is found in the cytoskeleton. The protein resides in the endosome. In terms of biological role, involved in endocytic trafficking. Probably acts as a cytoskeletal linker protein that tethers endosome vesicles to the cytoskeleton. The protein is Protein hook of Anopheles gambiae (African malaria mosquito).